We begin with the raw amino-acid sequence, 366 residues long: Bacteriochlorophyll a protein (366 aa).

Bacteriochlorophyll a is bound by residues histidine 110, histidine 145, histidine 290, histidine 297, and histidine 298.

In terms of assembly, homotrimer. Each subunit contains 7 molecules of bacteriochlorophyll a.

In terms of biological role, intermediary in the transfer of excitation energy from the chlorophyll to the reaction centers. This chain is Bacteriochlorophyll a protein, found in Prosthecochloris aestuarii.